We begin with the raw amino-acid sequence, 101 residues long: Small ribosomal subunit protein uS14 (101 aa).

The interval 48–69 (LSKLPRDSSPSRHRSRCELSGR) is disordered. Over residues 51-68 (LPRDSSPSRHRSRCELSG) the composition is skewed to basic and acidic residues.

Belongs to the universal ribosomal protein uS14 family. Part of the 30S ribosomal subunit. Contacts proteins S3 and S10.

In terms of biological role, binds 16S rRNA, required for the assembly of 30S particles and may also be responsible for determining the conformation of the 16S rRNA at the A site. The chain is Small ribosomal subunit protein uS14 from Stenotrophomonas maltophilia (strain R551-3).